Reading from the N-terminus, the 443-residue chain is Probable glycine dehydrogenase (decarboxylating) subunit 1 (443 aa).

It belongs to the GcvP family. N-terminal subunit subfamily. The glycine cleavage system is composed of four proteins: P, T, L and H. In this organism, the P 'protein' is a heterodimer of two subunits.

It catalyses the reaction N(6)-[(R)-lipoyl]-L-lysyl-[glycine-cleavage complex H protein] + glycine + H(+) = N(6)-[(R)-S(8)-aminomethyldihydrolipoyl]-L-lysyl-[glycine-cleavage complex H protein] + CO2. In terms of biological role, the glycine cleavage system catalyzes the degradation of glycine. The P protein binds the alpha-amino group of glycine through its pyridoxal phosphate cofactor; CO(2) is released and the remaining methylamine moiety is then transferred to the lipoamide cofactor of the H protein. In Nitratidesulfovibrio vulgaris (strain ATCC 29579 / DSM 644 / CCUG 34227 / NCIMB 8303 / VKM B-1760 / Hildenborough) (Desulfovibrio vulgaris), this protein is Probable glycine dehydrogenase (decarboxylating) subunit 1.